A 355-amino-acid polypeptide reads, in one-letter code: MSRYWSDIVQQLVPYVPGEQPALAHPVKLNTNENPYPPSPRVVAAIARELGETGDTLRRYPDPVARALRETVATHHRIKPEQVFVGNGSDEVLAHTFQALLKHDRPLRFPDITYSFYPTYARLYGVQTSNVPLADDFSIRVDDYLDDAGGVLFPNPNAPTGRALPLADVERIVAANPSSVVVIDEAYVDFGAQSAITLIDRYPNLLVVHTTSKARSLAGMRVGFAFGEAALIDALNRVKDSFNSYPLDRLAQVAAQAAYEDTDYFNATCRRVIDSRTRLTHALDALDFNIVPSAANFVFARHPAHDAGAIAAKLKEREIFVRHFRLPRIDQHLRITVGTDAECDALVAALRELLA.

An N6-(pyridoxal phosphate)lysine modification is found at K213.

It belongs to the class-II pyridoxal-phosphate-dependent aminotransferase family. Histidinol-phosphate aminotransferase subfamily. As to quaternary structure, homodimer. Requires pyridoxal 5'-phosphate as cofactor.

It catalyses the reaction L-histidinol phosphate + 2-oxoglutarate = 3-(imidazol-4-yl)-2-oxopropyl phosphate + L-glutamate. The protein operates within amino-acid biosynthesis; L-histidine biosynthesis; L-histidine from 5-phospho-alpha-D-ribose 1-diphosphate: step 7/9. This Burkholderia lata (strain ATCC 17760 / DSM 23089 / LMG 22485 / NCIMB 9086 / R18194 / 383) protein is Histidinol-phosphate aminotransferase 2.